Reading from the N-terminus, the 127-residue chain is MMIRGIRGATTVERDTEEEILQKTKQLLEKIIEENHTKPEDVVQMLLSATPDLHAVFPAKAVRELSGWQYVPVTCMQEMDVTGGLKKCIRVMMTVQTDVPQDQIRHVYLEKVVVLRPDLSLTKNTEL.

A Chorismate mutase aroH-type domain is found at 3 to 121 (IRGIRGATTV…VVVLRPDLSL (119 aa)). Prephenate contacts are provided by residues Arg7, 74–78 (TCMQE), Arg90, and Tyr108.

In terms of assembly, homotrimer.

The protein localises to the cytoplasm. It carries out the reaction chorismate = prephenate. It participates in metabolic intermediate biosynthesis; prephenate biosynthesis; prephenate from chorismate: step 1/1. Functionally, catalyzes the Claisen rearrangement of chorismate to prephenate. Probably involved in the aromatic amino acid biosynthesis. This chain is Chorismate mutase AroH, found in Bacillus subtilis (strain 168).